The sequence spans 189 residues: Protein GrpE (189 aa).

The interval 1-22 is disordered; that stretch reads MKEQQKETEQNIEEINDETVTE. Residues 10–22 show a composition bias toward acidic residues; sequence QNIEEINDETVTE.

It belongs to the GrpE family. In terms of assembly, homodimer.

The protein localises to the cytoplasm. In terms of biological role, participates actively in the response to hyperosmotic and heat shock by preventing the aggregation of stress-denatured proteins, in association with DnaK and GrpE. It is the nucleotide exchange factor for DnaK and may function as a thermosensor. Unfolded proteins bind initially to DnaJ; upon interaction with the DnaJ-bound protein, DnaK hydrolyzes its bound ATP, resulting in the formation of a stable complex. GrpE releases ADP from DnaK; ATP binding to DnaK triggers the release of the substrate protein, thus completing the reaction cycle. Several rounds of ATP-dependent interactions between DnaJ, DnaK and GrpE are required for fully efficient folding. This is Protein GrpE from Leuconostoc citreum (strain KM20).